We begin with the raw amino-acid sequence, 200 residues long: Nitrile hydratase subunit alpha (200 aa).

Cys105, Cys108, Ser109, and Cys110 together coordinate Fe(3+). Cysteine sulfinic acid (-SO2H) is present on Cys108. A Cysteine sulfenic acid (-SOH) modification is found at Cys110.

This sequence belongs to the nitrile hydratase subunit alpha family. As to quaternary structure, heterodimer of an alpha and a beta chain. Requires Fe(3+) as cofactor. Post-translationally, oxidation on Cys-108 is essential for the activity. Oxidation on Cys-110 stabilizes the Fe-NO ligand coordinated in the inactive form.

The enzyme catalyses an aliphatic primary amide = an aliphatic nitrile + H2O. Inactivated by oxidation of Cys-110 to a sulfenic acid. In terms of biological role, NHase catalyzes the hydration of various nitrile compounds to the corresponding amides. Industrial production of acrylamide is now being developed using some of the enzymes of this class. The polypeptide is Nitrile hydratase subunit alpha (nthA) (Pseudomonas chlororaphis (Pseudomonas aureofaciens)).